The primary structure comprises 419 residues: Histidine--tRNA ligase (419 aa).

Belongs to the class-II aminoacyl-tRNA synthetase family. Homodimer.

It is found in the cytoplasm. It carries out the reaction tRNA(His) + L-histidine + ATP = L-histidyl-tRNA(His) + AMP + diphosphate + H(+). The chain is Histidine--tRNA ligase from Desulforamulus reducens (strain ATCC BAA-1160 / DSM 100696 / MI-1) (Desulfotomaculum reducens).